The primary structure comprises 115 residues: Replication initiation control protein YabA (115 aa).

Residues His-86, Cys-88, Cys-102, and Cys-105 each coordinate Zn(2+).

This sequence belongs to the YabA family. Homotetramer. Interacts with both DnaA and DnaN, acting as a bridge between these two proteins. It depends on Zn(2+) as a cofactor.

The protein resides in the cytoplasm. Its subcellular location is the nucleoid. In terms of biological role, involved in control of chromosome replication initiation. Inhibits the cooperative binding of DnaA to the oriC region, thus negatively regulating initiation of chromosome replication. Inhibits the ability of DnaA-ATP to form a helix on DNA; does not disassemble preformed DnaA-DNA helices. Decreases the residence time of DnaA on the chromosome at its binding sites (oriC, replication forks and promoter-binding sites). Tethers DnaA to the replication machinery via the DNA polymerase beta sliding clamp subunit (dnaN). Associates with oriC and other DnaA targets on the chromosome in a DnaA-dependent manner. The chain is Replication initiation control protein YabA from Enterococcus faecalis (strain ATCC 700802 / V583).